The sequence spans 217 residues: tRNA (guanine-N(7)-)-methyltransferase (217 aa).

Glutamate 44, glutamate 69, aspartate 96, and aspartate 118 together coordinate S-adenosyl-L-methionine. Aspartate 118 is an active-site residue. Substrate contacts are provided by residues lysine 122, aspartate 154, and 191–194; that span reads TEYE.

The protein belongs to the class I-like SAM-binding methyltransferase superfamily. TrmB family.

The enzyme catalyses guanosine(46) in tRNA + S-adenosyl-L-methionine = N(7)-methylguanosine(46) in tRNA + S-adenosyl-L-homocysteine. Its pathway is tRNA modification; N(7)-methylguanine-tRNA biosynthesis. Catalyzes the formation of N(7)-methylguanine at position 46 (m7G46) in tRNA. The polypeptide is tRNA (guanine-N(7)-)-methyltransferase (Bacillus cytotoxicus (strain DSM 22905 / CIP 110041 / 391-98 / NVH 391-98)).